We begin with the raw amino-acid sequence, 263 residues long: Zinc transporter ZupT (263 aa).

5 consecutive transmembrane segments (helical) span residues 1-21, 37-57, 68-88, 116-136, and 138-158; these read MLFAFGLTLFAGLATGIGGLI, LGFSVGVMLYVSFVEILPGAF, GGSWAAVIGFFGGIALIAIID, MMKMGVLTALAIAIHNFPEGF, and TFLAGLSDPMIAIPVAVAIAI. Positions 131 and 134 each coordinate Fe(2+). Glu134 lines the Zn(2+) pocket. His159 contributes to the Zn(2+) binding site. Residues Asn160, Glu163, and Glu192 each contribute to the Fe(2+) site. Glu163 contributes to the Zn(2+) binding site. The next 3 membrane-spanning stretches (helical) occupy residues 184-204, 206-226, and 243-263; these read WATLSGLAEPAGALIGFLLLM, FIGPEALGLCFAAVAGVMVFI, and TAIYGLIAGMAVMAISLLLFI.

The protein belongs to the ZIP transporter (TC 2.A.5) family. ZupT subfamily.

It localises to the cell membrane. The catalysed reaction is Zn(2+)(in) = Zn(2+)(out). Its function is as follows. Mediates zinc uptake. May also transport other divalent cations. This chain is Zinc transporter ZupT, found in Corynebacterium glutamicum (strain ATCC 13032 / DSM 20300 / JCM 1318 / BCRC 11384 / CCUG 27702 / LMG 3730 / NBRC 12168 / NCIMB 10025 / NRRL B-2784 / 534).